We begin with the raw amino-acid sequence, 296 residues long: Glycine and tyrosine-rich protein (296 aa).

Positions 1–18 (MKVLVTALIISFSTAVLT) are cleaved as a signal peptide. Residues 157–280 (MESRLRPQAT…NQPEETPAPN (124 aa)) form a disordered region. Residues 172–264 (TGGQPSTGGK…STGGQPSTGG (93 aa)) are compositionally biased toward low complexity.

Component of the acid-insoluble and acid-soluble organic matrix of calcified layers of the shell (at protein level).

The protein localises to the secreted. The polypeptide is Glycine and tyrosine-rich protein (Lottia gigantea (Giant owl limpet)).